Here is a 589-residue protein sequence, read N- to C-terminus: Probable 9-cis-epoxycarotenoid dioxygenase NCED5, chloroplastic (589 aa).

The N-terminal 45 residues, 1-45 (MACSYILTPNPTKLNLSFAPSDLDAPSPSSSVSFTNTKPRRRKLS), are a transit peptide targeting the chloroplast. Residues 21–34 (SDLDAPSPSSSVSF) are compositionally biased toward low complexity. Residues 21–51 (SDLDAPSPSSSVSFTNTKPRRRKLSANSVSD) are disordered. The Fe cation site is built by His-287, His-336, His-401, and His-576.

The protein belongs to the carotenoid oxygenase family. As to quaternary structure, interacts in vitro with VAR3. The cofactor is Fe(2+). In terms of tissue distribution, detected only in seeds.

The protein resides in the plastid. Its subcellular location is the chloroplast thylakoid membrane. It catalyses the reaction a 9-cis-epoxycarotenoid + O2 = a 12'-apo-carotenal + 2-cis,4-trans-xanthoxin. The enzyme catalyses 9-cis-violaxanthin + O2 = (3S,5R,6S)-5,6-epoxy-3-hydroxy-5,6-dihydro-12'-apo-beta-caroten-12'-al + 2-cis,4-trans-xanthoxin. It carries out the reaction 9'-cis-neoxanthin + O2 = (3S,5R,6R)-3,5-dihydroxy-6,7-didehydro-5,6-dihydro-12'-apo-beta-caroten-12'-al + 2-cis,4-trans-xanthoxin. Functionally, has a 11,12(11',12') 9-cis epoxycarotenoid cleavage activity. Catalyzes the first step of abscisic-acid biosynthesis from carotenoids. The chain is Probable 9-cis-epoxycarotenoid dioxygenase NCED5, chloroplastic (NCED5) from Arabidopsis thaliana (Mouse-ear cress).